The chain runs to 1002 residues: Probable transport protein MmpL10 (1002 aa).

12 consecutive transmembrane segments (helical) span residues 1–21 (MVGCWVALALVLPMAVPSLAE), 177–197 (IAVMLLVILMVIYRNPVTMLL), 199–219 (LVTIGASLMTAQALVAGVSLV), 228–248 (AIVLLSAMIAGAGTDYAVFLI), 268–288 (AMMSVGKVIAASAATVGITFL), 306–326 (AIGIAVSFLAAVTLLPAILVL), 358–378 (YLGASLIGLVALASCASLAHF), 806–826 (IVAVTVVVVILILMALLRAIV), 835–855 (VVISYMSAIGLGVVVFQVFLG), 862–882 (VPGLAFVVLVAVGADYNMLLA), 901–921 (VRCTGGVITAAGLIFAASMSG), and 923–943 (LFSSIGTVVQGGFIIGVGILI).

Belongs to the resistance-nodulation-cell division (RND) (TC 2.A.6) family. MmpL subfamily.

It localises to the cell membrane. This chain is Probable transport protein MmpL10 (mmpL10), found in Mycobacterium bovis (strain ATCC BAA-935 / AF2122/97).